The following is a 2388-amino-acid chain: Spectrin beta chain, non-erythrocytic 2 (2388 aa).

Ser2 is subject to N-acetylserine. The actin-binding stretch occupies residues 2–278 (SSTLSPTDFD…IITYVATYYH (277 aa)). Ser6 and Ser31 each carry phosphoserine. Calponin-homology (CH) domains are found at residues 57-161 (AVQK…LRFQ) and 176-281 (KSAK…HYFS). 6 Spectrin repeats span residues 306 to 414 (LVEK…LALR), 427 to 527 (AARF…RERL), 532 to 639 (ELQK…RLEE), 642 to 744 (RLWR…QRLA), 749 to 849 (LYQF…RALE), and 856 to 954 (TMLS…KAAL). Ser959 is subject to Phosphoserine. Spectrin repeat units lie at residues 960 to 1063 (IQNY…SLGE), 1066 to 1169 (RLQD…GRLA), 1174 to 1266 (FQGF…NQEA), 1279 to 1379 (EQQH…ARSL), 1384 to 1485 (RAEL…RRLQ), 1489 to 1586 (EQHQ…RLEE), 1589 to 1692 (RAQQ…RLQE), 1696 to 1797 (LCQL…GQVL), 1801 to 1904 (YELQ…QLLL), 1910 to 2010 (FRFF…DWLQ), and 2017 to 2078 (VFGR…LTAL). Position 1073 is a phosphoserine (Ser1073). The residue at position 1574 (Ser1574) is a Phosphoserine. The span at 2080-2096 (ERENEQKRKREEEERRK) shows a compositional bias: basic and acidic residues. Disordered stretches follow at residues 2080-2112 (EREN…EGSL) and 2124-2207 (DGTQ…HVAT). A compositionally biased stretch (polar residues) spans 2124–2163 (DGTQSKLPPSTQAPSINGVCTDTESSQPLLEQQRLEQSNV). Phosphoserine is present on residues Ser2169 and Ser2199. The PH domain maps to 2218–2328 (QEQMEGTLCR…WLRVVNAAIA (111 aa)). The tract at residues 2333-2388 (ASGEPEEPVVPSASRGLTRAMTMPPVSQPEGSIVLRSKDGREREREKRFSFFKKNK) is disordered. At Thr2354 the chain carries Phosphothreonine. Phosphoserine is present on Ser2359. The segment covering 2368-2381 (RSKDGREREREKRF) has biased composition (basic and acidic residues).

This sequence belongs to the spectrin family. In terms of tissue distribution, abundantly transcribed in the brain. Neurons are the predominant cell-type to express the gene. Found abundantly in Purkinje cells.

The protein localises to the cytoplasm. It localises to the cytoskeleton. The protein resides in the cell cortex. Functionally, probably plays an important role in neuronal membrane skeleton. This Rattus norvegicus (Rat) protein is Spectrin beta chain, non-erythrocytic 2 (Sptbn2).